Here is a 101-residue protein sequence, read N- to C-terminus: Small ribosomal subunit protein uS14 (101 aa).

A compositionally biased stretch (basic and acidic residues) spans 1-10 (MAKKSSIEKN). The tract at residues 1–24 (MAKKSSIEKNNRRKRLTKNAAPKR) is disordered. Positions 11-24 (NRRKRLTKNAAPKR) are enriched in basic residues.

Belongs to the universal ribosomal protein uS14 family. As to quaternary structure, part of the 30S ribosomal subunit. Contacts proteins S3 and S10.

In terms of biological role, binds 16S rRNA, required for the assembly of 30S particles and may also be responsible for determining the conformation of the 16S rRNA at the A site. The sequence is that of Small ribosomal subunit protein uS14 from Rhodopseudomonas palustris (strain BisB18).